The following is a 437-amino-acid chain: Aspartate aminotransferase, mitochondrial (437 aa).

Residues Gly72, Trp167, and Asn220 each coordinate L-aspartate. Residue Lys284 is modified to N6-(pyridoxal phosphate)lysine. L-aspartate is bound at residue Arg413.

Belongs to the class-I pyridoxal-phosphate-dependent aminotransferase family. As to quaternary structure, homodimer. The cofactor is pyridoxal 5'-phosphate.

The protein resides in the mitochondrion matrix. The enzyme catalyses L-aspartate + 2-oxoglutarate = oxaloacetate + L-glutamate. Plays a key role in amino acid metabolism. Important for metabolite exchange between mitochondria and cytosol. In Schizosaccharomyces pombe (strain 972 / ATCC 24843) (Fission yeast), this protein is Aspartate aminotransferase, mitochondrial.